We begin with the raw amino-acid sequence, 258 residues long: Peroxisomal membrane protein 11B (258 aa).

An N6-acetyllysine modification is found at Lys43. The interaction with PEX19, PEX11G and FIS1 and peroxisome targeting stretch occupies residues 210–258 (VVRNACDLFIPLDKLGLWRCGPGIVGLCGLVSSILSILTLICPWLRLKP). A helical transmembrane segment spans residues 232–254 (GIVGLCGLVSSILSILTLICPWL).

This sequence belongs to the peroxin-11 family. In terms of assembly, homodimer. Heterodimer with PEX11G. Interacts with PEX19. Interacts with FIS1.

It localises to the peroxisome membrane. Involved in peroxisomal proliferation. May regulate peroxisome division by recruiting the dynamin-related GTPase DNM1L to the peroxisomal membrane. Promotes membrane protrusion and elongation on the peroxisomal surface. This Bos taurus (Bovine) protein is Peroxisomal membrane protein 11B (PEX11B).